Consider the following 193-residue polypeptide: MASSTLLITLLISLSAFFLRMVLAQVPATCASRLLSLAPCGPFVQGFAQLPAQPCCDSLNQIYSQEATCLCLFLNNTSTLSPAFPINQTLALQLPPLCNIPANSSTCSSSFPGEAPSDSSSVAPPPSSSTGSQISQGAKNNSRVAATPVAQMAPRPTSFMGLGYGLKSSGSKSEIQLTIFALAAILPAALLLI.

The N-terminal stretch at 1-24 is a signal peptide; the sequence is MASSTLLITLLISLSAFFLRMVLA. Cystine bridges form between Cys30-Cys71, Cys40-Cys55, Cys56-Cys98, and Cys69-Cys107. N-linked (GlcNAc...) asparagine glycans are attached at residues Asn76, Asn87, and Asn103. The interval 109-140 is disordered; it reads SSFPGEAPSDSSSVAPPPSSSTGSQISQGAKN. Positions 116–132 are enriched in low complexity; the sequence is PSDSSSVAPPPSSSTGS. The N-linked (GlcNAc...) asparagine glycan is linked to Asn140. Ser168 carries the GPI-anchor amidated serine lipid modification. The propeptide at 169-193 is removed in mature form; it reads SGSKSEIQLTIFALAAILPAALLLI.

Belongs to the plant LTP family.

It is found in the cell membrane. In terms of biological role, probable lipid transfer protein. This is Non-specific lipid transfer protein GPI-anchored 10 from Arabidopsis thaliana (Mouse-ear cress).